A 929-amino-acid polypeptide reads, in one-letter code: Patatin-like phospholipase domain-containing protein CNE02340 (929 aa).

Residues 37–85 form a disordered region; that stretch reads QPLDGDSSPLSPRSFSLPPESPQLSTASVKAPPPTWKYGPDNGTLRSGR. The span at 43 to 54 shows a compositional bias: low complexity; that stretch reads SSPLSPRSFSLP. The chain crosses the membrane as a helical span at residues 126 to 146; the sequence is WPLLFFIFFIIYLEFSAYVIT. In terms of domain architecture, PNPLA spans 301-493; the sequence is LCLSGGASFG…REDIPLGSLH (193 aa). A GXSXG motif is present at residues 332–336; it reads GTSAG. Residue Ser-334 is the Nucleophile of the active site. Asp-480 (proton acceptor) is an active-site residue. 3 disordered regions span residues 644–765, 778–806, and 818–929; these read ALSH…NFGD, LSSP…QRFR, and VSES…QDGA. 2 stretches are compositionally biased toward polar residues: residues 652 to 664 and 745 to 764; these read NDPA…TNPE and PTHS…SNFG. Residues 779–806 are compositionally biased toward low complexity; sequence SSPFRSIRSNTSSSSNNVQSPSSSQRFR. Over residues 856–878 the composition is skewed to basic and acidic residues; the sequence is VESHSDRSEDEMLHSGANVKEEY.

This sequence belongs to the PLPL family.

Its subcellular location is the membrane. Functionally, probable lipid hydrolase. This is Patatin-like phospholipase domain-containing protein CNE02340 from Cryptococcus neoformans var. neoformans serotype D (strain JEC21 / ATCC MYA-565) (Filobasidiella neoformans).